Consider the following 453-residue polypeptide: Chromosomal replication initiator protein DnaA (453 aa).

Positions 1–74 (MKEKQFWNRI…GFEIYDAEIT (74 aa)) are domain I, interacts with DnaA modulators. A domain II region spans residues 74–113 (TPHYIFTKPQDTTSSQVEEATNLTLYDYSPKLVSIPYSDT). The segment at 114 to 331 (GLKEKYTFDN…GAINDITLIA (218 aa)) is domain III, AAA+ region. Positions 158, 160, 161, and 162 each coordinate ATP. The tract at residues 332–453 (RVKKIKDITI…EIESIKKKIK (122 aa)) is domain IV, binds dsDNA.

This sequence belongs to the DnaA family. As to quaternary structure, oligomerizes as a right-handed, spiral filament on DNA at oriC.

Its subcellular location is the cytoplasm. Plays an essential role in the initiation and regulation of chromosomal replication. ATP-DnaA binds to the origin of replication (oriC) to initiate formation of the DNA replication initiation complex once per cell cycle. Binds the DnaA box (a 9 base pair repeat at the origin) and separates the double-stranded (ds)DNA. Forms a right-handed helical filament on oriC DNA; dsDNA binds to the exterior of the filament while single-stranded (ss)DNA is stabiized in the filament's interior. The ATP-DnaA-oriC complex binds and stabilizes one strand of the AT-rich DNA unwinding element (DUE), permitting loading of DNA polymerase. After initiation quickly degrades to an ADP-DnaA complex that is not apt for DNA replication. Binds acidic phospholipids. The chain is Chromosomal replication initiator protein DnaA from Streptococcus pneumoniae (strain Taiwan19F-14).